A 78-amino-acid chain; its full sequence is Exodeoxyribonuclease 7 small subunit (78 aa).

The protein belongs to the XseB family. As to quaternary structure, heterooligomer composed of large and small subunits.

It localises to the cytoplasm. It catalyses the reaction Exonucleolytic cleavage in either 5'- to 3'- or 3'- to 5'-direction to yield nucleoside 5'-phosphates.. In terms of biological role, bidirectionally degrades single-stranded DNA into large acid-insoluble oligonucleotides, which are then degraded further into small acid-soluble oligonucleotides. In Cutibacterium acnes (strain DSM 16379 / KPA171202) (Propionibacterium acnes), this protein is Exodeoxyribonuclease 7 small subunit.